A 427-amino-acid chain; its full sequence is Trigger factor (427 aa).

The PPIase FKBP-type domain maps to 163 to 248; sequence GDTAVIDFEG…VHEIKAKELP (86 aa).

The protein belongs to the FKBP-type PPIase family. Tig subfamily.

The protein localises to the cytoplasm. It catalyses the reaction [protein]-peptidylproline (omega=180) = [protein]-peptidylproline (omega=0). Functionally, involved in protein export. Acts as a chaperone by maintaining the newly synthesized protein in an open conformation. Functions as a peptidyl-prolyl cis-trans isomerase. The protein is Trigger factor of Bacillus cytotoxicus (strain DSM 22905 / CIP 110041 / 391-98 / NVH 391-98).